The sequence spans 43 residues: Protein PsbN (43 aa).

The helical transmembrane segment at 5-27 (TLVAIPISCLLVSFTGYALYTAF) threads the bilayer.

It belongs to the PsbN family.

Its subcellular location is the plastid. It localises to the chloroplast thylakoid membrane. In terms of biological role, may play a role in photosystem I and II biogenesis. The protein is Protein PsbN of Sphagnum cuspidatum (Bog moss).